A 256-amino-acid chain; its full sequence is Sorbitol dehydrogenase (256 aa).

NAD(+) contacts are provided by residues Arg-15–Ile-17, Asp-36, Asp-59–Val-60, Asn-86, Tyr-152, Lys-156, and Pro-182–Gly-187. The active-site Proton acceptor is Tyr-152.

Belongs to the short-chain dehydrogenases/reductases (SDR) family. In terms of assembly, homodimer. May function as a tetramer in vivo.

It carries out the reaction keto-D-fructose + NADH + H(+) = D-sorbitol + NAD(+). The enzyme catalyses galactitol + NAD(+) = keto-D-tagatose + NADH + H(+). The catalysed reaction is L-iditol + NAD(+) = keto-L-sorbose + NADH + H(+). With respect to regulation, inhibited by DTT, N-bromosuccinimide and iodoacetic acid. In terms of biological role, catalyzes the oxidation of D-sorbitol (D-glucitol) to D-fructose. Can also catalyze the oxidation of galactitol to D-tagatose and the oxidation of L-iditol, with lower efficiency. In Cereibacter sphaeroides (Rhodobacter sphaeroides), this protein is Sorbitol dehydrogenase (polS).